Reading from the N-terminus, the 468-residue chain is 3-isopropylmalate dehydratase large subunit (468 aa).

Positions 349, 409, and 412 each coordinate [4Fe-4S] cluster.

Belongs to the aconitase/IPM isomerase family. LeuC type 1 subfamily. In terms of assembly, heterodimer of LeuC and LeuD. Requires [4Fe-4S] cluster as cofactor.

The enzyme catalyses (2R,3S)-3-isopropylmalate = (2S)-2-isopropylmalate. Its pathway is amino-acid biosynthesis; L-leucine biosynthesis; L-leucine from 3-methyl-2-oxobutanoate: step 2/4. Catalyzes the isomerization between 2-isopropylmalate and 3-isopropylmalate, via the formation of 2-isopropylmaleate. The polypeptide is 3-isopropylmalate dehydratase large subunit (Shewanella baltica (strain OS223)).